The sequence spans 396 residues: Carbamoyl phosphate synthase small chain (396 aa).

Residues 1 to 204 (MTQHDNDPAW…WDKGFGQQDK (204 aa)) are CPSase. Residues Ser59, Gly256, and Gly258 each coordinate L-glutamine. A Glutamine amidotransferase type-1 domain is found at 208–396 (NVVAIDYGIK…AELMRQKKSA (189 aa)). Catalysis depends on Cys285, which acts as the Nucleophile. Positions 286, 289, 327, 329, and 330 each coordinate L-glutamine. Active-site residues include His369 and Glu371.

Belongs to the CarA family. In terms of assembly, composed of two chains; the small (or glutamine) chain promotes the hydrolysis of glutamine to ammonia, which is used by the large (or ammonia) chain to synthesize carbamoyl phosphate. Tetramer of heterodimers (alpha,beta)4.

The catalysed reaction is hydrogencarbonate + L-glutamine + 2 ATP + H2O = carbamoyl phosphate + L-glutamate + 2 ADP + phosphate + 2 H(+). The enzyme catalyses L-glutamine + H2O = L-glutamate + NH4(+). The protein operates within amino-acid biosynthesis; L-arginine biosynthesis; carbamoyl phosphate from bicarbonate: step 1/1. It functions in the pathway pyrimidine metabolism; UMP biosynthesis via de novo pathway; (S)-dihydroorotate from bicarbonate: step 1/3. In terms of biological role, small subunit of the glutamine-dependent carbamoyl phosphate synthetase (CPSase). CPSase catalyzes the formation of carbamoyl phosphate from the ammonia moiety of glutamine, carbonate, and phosphate donated by ATP, constituting the first step of 2 biosynthetic pathways, one leading to arginine and/or urea and the other to pyrimidine nucleotides. The small subunit (glutamine amidotransferase) binds and cleaves glutamine to supply the large subunit with the substrate ammonia. The polypeptide is Carbamoyl phosphate synthase small chain (Bradyrhizobium diazoefficiens (strain JCM 10833 / BCRC 13528 / IAM 13628 / NBRC 14792 / USDA 110)).